The following is a 453-amino-acid chain: GTPase Der (453 aa).

EngA-type G domains follow at residues 4-169 (PIVA…PPVT) and 177-352 (IKIA…EEHK). GTP is bound by residues 10 to 17 (GRPNVGKS), 57 to 61 (DTGGL), 120 to 123 (NKCE), 183 to 190 (GRPNVGKS), 230 to 234 (DTAGI), and 295 to 298 (NKWD). In terms of domain architecture, KH-like spans 353–438 (RRVSTSVINE…PIRLLWRSKK (86 aa)).

Belongs to the TRAFAC class TrmE-Era-EngA-EngB-Septin-like GTPase superfamily. EngA (Der) GTPase family. Associates with the 50S ribosomal subunit.

Functionally, GTPase that plays an essential role in the late steps of ribosome biogenesis. This Nostoc sp. (strain PCC 7120 / SAG 25.82 / UTEX 2576) protein is GTPase Der.